We begin with the raw amino-acid sequence, 457 residues long: Protein translocase subunit SecY (457 aa).

10 consecutive transmembrane segments (helical) span residues 17-37, 75-95, 118-138, 162-182, 195-215, 230-250, 287-307, 326-346, 386-406, and 412-432; these read IFFTFSLLALCRIGVFIPVPG, IALGVVPYISASIIVQLLVVF, TRLFTLVLACVQSLLFAKFAL, WVFYLTTVVVMITGTLLLMWV, ISLIITLGILASFPSVLGSIF, IVSLLILCAVFVFVLMATVLI, VIPVIFASSLLMFPATIGQFL, VAYSIFYVLLIIFFTYFWTAT, LLGAVFLAVVAILPSILGRIL, and VSYFLGGTAMLIVVGVILDTM.

The protein belongs to the SecY/SEC61-alpha family. Component of the Sec protein translocase complex. Heterotrimer consisting of SecY, SecE and SecG subunits. The heterotrimers can form oligomers, although 1 heterotrimer is thought to be able to translocate proteins. Interacts with the ribosome. Interacts with SecDF, and other proteins may be involved. Interacts with SecA.

The protein localises to the cell inner membrane. The central subunit of the protein translocation channel SecYEG. Consists of two halves formed by TMs 1-5 and 6-10. These two domains form a lateral gate at the front which open onto the bilayer between TMs 2 and 7, and are clamped together by SecE at the back. The channel is closed by both a pore ring composed of hydrophobic SecY resides and a short helix (helix 2A) on the extracellular side of the membrane which forms a plug. The plug probably moves laterally to allow the channel to open. The ring and the pore may move independently. This chain is Protein translocase subunit SecY, found in Chlamydia trachomatis serovar D (strain ATCC VR-885 / DSM 19411 / UW-3/Cx).